We begin with the raw amino-acid sequence, 1313 residues long: Target of rapamycin complex 1 subunit mip1 (1313 aa).

The tract at residues 1-35 is disordered; that stretch reads MNDRISEVSGSSRARRSVLSYGTTETGSDRYTENS. Serine 834, serine 837, and serine 882 each carry phosphoserine. WD repeat units follow at residues 986–1029, 1033–1074, 1087–1126, 1130–1170, 1176–1216, 1219–1259, and 1268–1308; these read TFNN…NSFK, SATT…KVEL, GDRN…CYAN, RSSN…RDSL, EHSS…SLQT, TDNS…NTFR, and PKPS…IHTD.

This sequence belongs to the WD repeat RAPTOR family. In terms of assembly, the target of rapamycin complex 1 (TORC1) is composed of at least mip1, pop3/wat1, tco89, toc1 and tor2.

The protein localises to the cytoplasm. Its function is as follows. Component of TORC1, which regulates multiple cellular processes to control cell growth in response to environmental signals. Tor2 is essential for growth. Nutrient limitation and environmental stress signals cause inactivation of TORC1. Active TORC1 positively controls cell growth and ribosome biogenesis by regulating ribosomal protein gene expression. TORC1 negatively controls G1 cell-cycle arrest, sexual development and amino acid uptake. Represses mating, meiosis and sporulation efficiency by interfering with the functions of the transcription factor ste11 and the meiosis-promoting RNA-binding protein mei2. In Schizosaccharomyces pombe (strain 972 / ATCC 24843) (Fission yeast), this protein is Target of rapamycin complex 1 subunit mip1.